Reading from the N-terminus, the 411-residue chain is S-adenosylmethionine synthase (411 aa).

His15 serves as a coordination point for ATP. Asp17 lines the Mg(2+) pocket. Glu43 contacts K(+). Residues Glu56 and Gln99 each coordinate L-methionine. Positions 99–109 are flexible loop; sequence QSQEIAQGVDT. Residues 179 to 181, Asp260, 266 to 267, Ala283, and Lys287 each bind ATP; these read DGK and RK. Residue Asp260 coordinates L-methionine. Lys291 provides a ligand contact to L-methionine.

The protein belongs to the AdoMet synthase family. As to quaternary structure, homotetramer; dimer of dimers. Mg(2+) is required as a cofactor. Requires K(+) as cofactor.

Its subcellular location is the cytoplasm. It carries out the reaction L-methionine + ATP + H2O = S-adenosyl-L-methionine + phosphate + diphosphate. The protein operates within amino-acid biosynthesis; S-adenosyl-L-methionine biosynthesis; S-adenosyl-L-methionine from L-methionine: step 1/1. In terms of biological role, catalyzes the formation of S-adenosylmethionine (AdoMet) from methionine and ATP. The overall synthetic reaction is composed of two sequential steps, AdoMet formation and the subsequent tripolyphosphate hydrolysis which occurs prior to release of AdoMet from the enzyme. In Corynebacterium jeikeium (strain K411), this protein is S-adenosylmethionine synthase.